A 578-amino-acid polypeptide reads, in one-letter code: Tetratricopeptide repeat protein 39A (578 aa).

TPR repeat units lie at residues 280-313, 470-503, and 511-544; these read AIFL…QQHW, CLVK…EKKI, and PNAL…YKNY.

This sequence belongs to the TTC39 family.

The polypeptide is Tetratricopeptide repeat protein 39A (Ttc39a) (Mus musculus (Mouse)).